A 605-amino-acid polypeptide reads, in one-letter code: Sodium-independent sulfate anion transporter (605 aa).

Residues 1-50 are Extracellular-facing; the sequence is MPSSLKGLGQAWLSSSSMALSACCSVSAWQKRLPVLAWLPRYSLQWLKMD. The chain crosses the membrane as a helical span at residues 51-71; it reads FIAGLSVGLTVIPQALAYAEV. Position 72 (A72) is a topological domain, cytoplasmic. Residues 73–93 traverse the membrane as a helical segment; sequence GLPPQYGLYSAFTGCFVYVFL. Residues 94 to 98 lie on the Extracellular side of the membrane; that stretch reads GTSRD. A helical transmembrane segment spans residues 99-119; it reads VTLGPTAIMSLLVSFYTFHEP. Over 120–122 the chain is Cytoplasmic; the sequence is AYA. Residues 123-143 traverse the membrane as a helical segment; that stretch reads VLLTFLSGCIQLAMGLLHLGF. The Extracellular segment spans residues 144–146; it reads LLD. Residues 147-167 form a helical membrane-spanning segment; it reads FISCPVIKGFTSAAAIIIGFG. Residues 168–196 are Cytoplasmic-facing; that stretch reads QIKNLLGLHNIPRQFFLQVYHTFLSVGET. A helical membrane pass occupies residues 197-217; it reads RLGDAILGLVCMVLLLVLKLM. The Extracellular portion of the chain corresponds to 218-249; sequence RDRIPPVHPEMPLCVRLSCGLVWTTATARNAL. Residues 250-270 form a helical membrane-spanning segment; sequence VVSFAALVAYSFEVTGYQPFI. At 271–303 the chain is on the cytoplasmic side; that stretch reads LTGEIAKGLPPVRVPPFSVTMANGTVSFTRMVQ. The chain crosses the membrane as a helical span at residues 304–324; it reads DLGAGLAVVPLIGLLESIAVA. The Extracellular portion of the chain corresponds to 325-340; the sequence is KAFASQNDYHVDANQE. The helical transmembrane segment at 341–361 threads the bilayer; that stretch reads LLAIGLTNMLGSFVSSYPITG. Over 362 to 373 the chain is Cytoplasmic; sequence SFGRTAVNAQSG. A helical membrane pass occupies residues 374–394; sequence VCTPAGGLVTGALVLLSLDYL. Over 395-397 the chain is Extracellular; it reads TSL. The chain crosses the membrane as a helical span at residues 398 to 418; it reads FYYIPKAALAAVIIMAVVPLF. At 419–447 the chain is on the cytoplasmic side; it reads DTKIFGMLWRVKRLDLLPLCATFLLCFWE. Residues 448-468 traverse the membrane as a helical segment; sequence VQYGILAGTLVSTLFLLHFVA. Topologically, residues 469–605 are extracellular; sequence RPKTQVSEGP…PEHKVTLLTA (137 aa). The STAS domain occupies 479–582; it reads VLILQLASGL…EKAEQYVRQE (104 aa).

It belongs to the SLC26A/SulP transporter (TC 2.A.53) family.

It is found in the cell membrane. Its subcellular location is the lysosome membrane. The protein localises to the apical cell membrane. The protein resides in the basolateral cell membrane. It carries out the reaction hydrogencarbonate(in) + chloride(out) = hydrogencarbonate(out) + chloride(in). The catalysed reaction is sulfate(in) + H(+)(in) = sulfate(out) + H(+)(out). The enzyme catalyses oxalate(in) + chloride(out) = oxalate(out) + chloride(in). In terms of biological role, sodium-independent anion exchanger mediating bicarbonate, chloride, sulfate and oxalate transport. Exhibits sodium-independent sulfate anion transporter activity that may cooperate with SLC26A2 to mediate DIDS-sensitive sulfate uptake into high endothelial venules endothelial cells (HEVEC). In the kidney, mediates chloride-bicarbonate exchange, facilitating V-ATPase-mediated acid secretion. May function as a chloride channel, playing an important role in moderating chloride homeostasis and neuronal activity in the cerebellum. The polypeptide is Sodium-independent sulfate anion transporter (Slc26a11) (Cavia porcellus (Guinea pig)).